Here is a 169-residue protein sequence, read N- to C-terminus: NADH-quinone oxidoreductase subunit B (169 aa).

[4Fe-4S] cluster is bound by residues C45, C46, C111, and C141.

The protein belongs to the complex I 20 kDa subunit family. As to quaternary structure, NDH-1 is composed of 14 different subunits. Subunits NuoB, C, D, E, F, and G constitute the peripheral sector of the complex. [4Fe-4S] cluster is required as a cofactor.

It localises to the cell membrane. It carries out the reaction a quinone + NADH + 5 H(+)(in) = a quinol + NAD(+) + 4 H(+)(out). In terms of biological role, NDH-1 shuttles electrons from NADH, via FMN and iron-sulfur (Fe-S) centers, to quinones in the respiratory chain. The immediate electron acceptor for the enzyme in this species is believed to be a menaquinone. Couples the redox reaction to proton translocation (for every two electrons transferred, four hydrogen ions are translocated across the cytoplasmic membrane), and thus conserves the redox energy in a proton gradient. The chain is NADH-quinone oxidoreductase subunit B from Clostridium beijerinckii (strain ATCC 51743 / NCIMB 8052) (Clostridium acetobutylicum).